The following is a 309-amino-acid chain: Ribosomal protein L11 methyltransferase (309 aa).

Residues Thr152, Gly178, Asp200, and Asn242 each contribute to the S-adenosyl-L-methionine site.

This sequence belongs to the methyltransferase superfamily. PrmA family.

The protein localises to the cytoplasm. The catalysed reaction is L-lysyl-[protein] + 3 S-adenosyl-L-methionine = N(6),N(6),N(6)-trimethyl-L-lysyl-[protein] + 3 S-adenosyl-L-homocysteine + 3 H(+). Functionally, methylates ribosomal protein L11. The chain is Ribosomal protein L11 methyltransferase from Pelobacter propionicus (strain DSM 2379 / NBRC 103807 / OttBd1).